Reading from the N-terminus, the 67-residue chain is Probable Sec-independent protein translocase protein TatE (67 aa).

Residues 4-21 (ISITKLLVVAALVVLLFG) traverse the membrane as a helical segment.

Belongs to the TatA/E family. TatE subfamily.

The protein localises to the cell inner membrane. Part of the twin-arginine translocation (Tat) system that transports large folded proteins containing a characteristic twin-arginine motif in their signal peptide across membranes. TatE shares overlapping functions with TatA. The chain is Probable Sec-independent protein translocase protein TatE from Salmonella dublin (strain CT_02021853).